A 239-amino-acid polypeptide reads, in one-letter code: Uridylate kinase (239 aa).

13–16 (KVSG) provides a ligand contact to ATP. Glycine 55 provides a ligand contact to UMP. Residues glycine 56 and arginine 60 each contribute to the ATP site. UMP-binding positions include aspartate 75 and 136–143 (TGNPFFTT). Residues threonine 163, glutamine 164, tyrosine 169, and aspartate 172 each contribute to the ATP site.

It belongs to the UMP kinase family. As to quaternary structure, homohexamer.

The protein localises to the cytoplasm. The enzyme catalyses UMP + ATP = UDP + ADP. It functions in the pathway pyrimidine metabolism; CTP biosynthesis via de novo pathway; UDP from UMP (UMPK route): step 1/1. Its activity is regulated as follows. Inhibited by UTP. Functionally, catalyzes the reversible phosphorylation of UMP to UDP. The polypeptide is Uridylate kinase (Bartonella henselae (strain ATCC 49882 / DSM 28221 / CCUG 30454 / Houston 1) (Rochalimaea henselae)).